We begin with the raw amino-acid sequence, 70 residues long: DNA-directed RNA polymerase subunit omega (70 aa).

This sequence belongs to the RNA polymerase subunit omega family. As to quaternary structure, the RNAP catalytic core consists of 2 alpha, 1 beta, 1 beta' and 1 omega subunit. When a sigma factor is associated with the core the holoenzyme is formed, which can initiate transcription.

The catalysed reaction is RNA(n) + a ribonucleoside 5'-triphosphate = RNA(n+1) + diphosphate. Functionally, promotes RNA polymerase assembly. Latches the N- and C-terminal regions of the beta' subunit thereby facilitating its interaction with the beta and alpha subunits. The polypeptide is DNA-directed RNA polymerase subunit omega (Thermoanaerobacter pseudethanolicus (strain ATCC 33223 / 39E) (Clostridium thermohydrosulfuricum)).